The primary structure comprises 270 residues: Formamidopyrimidine-DNA glycosylase (270 aa).

P2 functions as the Schiff-base intermediate with DNA in the catalytic mechanism. E3 acts as the Proton donor in catalysis. The active-site Proton donor; for beta-elimination activity is the K58. 3 residues coordinate DNA: H91, R110, and K151. The FPG-type zinc finger occupies 236 to 270; that stretch reads FAYGRGGQPCKVCGTTLREIKLGQRASVYCPKCQR. The Proton donor; for delta-elimination activity role is filled by R260.

The protein belongs to the FPG family. As to quaternary structure, monomer. Zn(2+) serves as cofactor.

It carries out the reaction Hydrolysis of DNA containing ring-opened 7-methylguanine residues, releasing 2,6-diamino-4-hydroxy-5-(N-methyl)formamidopyrimidine.. The enzyme catalyses 2'-deoxyribonucleotide-(2'-deoxyribose 5'-phosphate)-2'-deoxyribonucleotide-DNA = a 3'-end 2'-deoxyribonucleotide-(2,3-dehydro-2,3-deoxyribose 5'-phosphate)-DNA + a 5'-end 5'-phospho-2'-deoxyribonucleoside-DNA + H(+). In terms of biological role, involved in base excision repair of DNA damaged by oxidation or by mutagenic agents. Acts as a DNA glycosylase that recognizes and removes damaged bases. Has a preference for oxidized purines, such as 7,8-dihydro-8-oxoguanine (8-oxoG). Has AP (apurinic/apyrimidinic) lyase activity and introduces nicks in the DNA strand. Cleaves the DNA backbone by beta-delta elimination to generate a single-strand break at the site of the removed base with both 3'- and 5'-phosphates. The polypeptide is Formamidopyrimidine-DNA glycosylase (Pseudomonas syringae pv. tomato (strain ATCC BAA-871 / DC3000)).